A 2499-amino-acid chain; its full sequence is Probable polyketide synthase 22 (2499 aa).

The Ketosynthase family 3 (KS3) domain occupies 11–430 (DNQVAIVGLG…GSNACVLLSE (420 aa)). Catalysis depends on for beta-ketoacyl synthase activity residues C177, H316, and H354. The acyl/malonyl transferases stretch occupies residues 623 to 656 (GITPSIIVGHSLGEVASAFCSGMIDLETACFVIY). Catalysis depends on S633, which acts as the For acyl/malonyl transferase activity. Positions 922–1044 (APINQLGNKN…SRILMKSLDV (123 aa)) are N-terminal hotdog fold. The 288-residue stretch at 922 to 1209 (APINQLGNKN…IASTLSTKSE (288 aa)) folds into the PKS/mFAS DH domain. H956 (proton acceptor; for dehydratase activity) is an active-site residue. A C-terminal hotdog fold region spans residues 1059 to 1209 (NWSTLKREQL…IASTLSTKSE (151 aa)). D1121 serves as the catalytic Proton donor; for dehydratase activity. The Carrier domain occupies 2414-2491 (EKEFSIRQDI…QIINIVTTKV (78 aa)). An O-(pantetheine 4'-phosphoryl)serine modification is found at S2451.

Pantetheine 4'-phosphate serves as cofactor.

In terms of biological role, probable polyketide synthase. The chain is Probable polyketide synthase 22 (pks22) from Dictyostelium discoideum (Social amoeba).